A 729-amino-acid polypeptide reads, in one-letter code: Glycerophosphodiester phosphodiesterase GDPDL5 (729 aa).

The signal sequence occupies residues 1–22 (MACPRVIFLILITFFILQTAFS). GP-PDE domains lie at 33 to 320 (PAVI…YRAI) and 337 to 645 (ITII…ARYR). Residues Asn88, Asn162, Asn218, Asn227, Asn285, Asn302, Asn390, Asn401, and Asn507 are each glycosylated (N-linked (GlcNAc...) asparagine). The helical transmembrane segment at 709-729 (AIEVPFAFIAMAILVCFFISV) threads the bilayer.

The protein belongs to the glycerophosphoryl diester phosphodiesterase family. As to expression, expressed in stems, flowers and siliques.

The protein localises to the membrane. It catalyses the reaction a sn-glycero-3-phosphodiester + H2O = an alcohol + sn-glycerol 3-phosphate + H(+). This Arabidopsis thaliana (Mouse-ear cress) protein is Glycerophosphodiester phosphodiesterase GDPDL5.